The following is a 162-amino-acid chain: Interleukin-15 (162 aa).

The N-terminal stretch at 1–29 (MRISKPSLRSTSIQCYLCFLLNSHLITEA) is a signal peptide. Residues 30-48 (GIHVFVWGCISAGLPKTEA) constitute a propeptide that is removed on maturation. Disulfide bonds link Cys-83/Cys-133 and Cys-90/Cys-136. N-linked (GlcNAc...) asparagine glycosylation is found at Asn-119 and Asn-127.

Belongs to the IL-15/IL-21 family.

The protein resides in the secreted. Its function is as follows. Cytokine that plays a major role in the development of inflammatory and protective immune responses to microbial invaders and parasites by modulating immune cells of both the innate and adaptive immune systems. Stimulates the proliferation of natural killer cells, T-cells and B-cells and promotes the secretion of several cytokines. In monocytes, induces the production of IL8 and monocyte chemotactic protein 1/CCL2, two chemokines that attract neutrophils and monocytes respectively to sites of infection. Unlike most cytokines, which are secreted in soluble form, IL15 is expressed in association with its high affinity IL15RA on the surface of IL15-producing cells and delivers signals to target cells that express IL2RB and IL2RG receptor subunits. Binding to its receptor triggers the phosphorylation of JAK1 and JAK3 and the recruitment and subsequent phosphorylation of signal transducer and activator of transcription-3/STAT3 and STAT5. In mast cells, induces the rapid tyrosine phosphorylation of STAT6 and thereby controls mast cell survival and release of cytokines such as IL4. This chain is Interleukin-15 (IL15), found in Cavia porcellus (Guinea pig).